A 145-amino-acid polypeptide reads, in one-letter code: uncharacterized protein (145 aa).

Residues 1 to 41 (MEQHYHQQNQLRQLKQQQLKELLQQQSKDKEEDEQKHDDYR) are a coiled coil. The segment at 1 to 91 (MEQHYHQQNQ…LQISEPEGES (91 aa)) is disordered. Positions 7–26 (QQNQLRQLKQQQLKELLQQQ) are enriched in low complexity. Residues 27-42 (SKDKEEDEQKHDDYRS) show a composition bias toward basic and acidic residues. Residues 43-58 (PTKTTTTTATSTSAAT) show a composition bias toward low complexity.

This is an uncharacterized protein from Dictyostelium discoideum (Social amoeba).